The sequence spans 82 residues: MAAGSTGERPFFEIITSVRYWIIHAVTLPAIFIAGFLFVSTGLAYDAFGTPRPDTYFQASETKAPVVSQRFESKAQLDLRLK.

Residues 22–36 traverse the membrane as a helical segment; sequence IIHAVTLPAIFIAGF. His24 contributes to the heme binding site.

It belongs to the PsbE/PsbF family. As to quaternary structure, heterodimer of an alpha subunit and a beta subunit. PSII is composed of 1 copy each of membrane proteins PsbA, PsbB, PsbC, PsbD, PsbE, PsbF, PsbH, PsbI, PsbJ, PsbK, PsbL, PsbM, PsbT, PsbX, PsbY, Psb30/Ycf12, peripheral proteins PsbO, CyanoQ (PsbQ), PsbU, PsbV and a large number of cofactors. It forms dimeric complexes. Heme b is required as a cofactor.

The protein localises to the cellular thylakoid membrane. Its function is as follows. This b-type cytochrome is tightly associated with the reaction center of photosystem II (PSII). PSII is a light-driven water:plastoquinone oxidoreductase that uses light energy to abstract electrons from H(2)O, generating O(2) and a proton gradient subsequently used for ATP formation. It consists of a core antenna complex that captures photons, and an electron transfer chain that converts photonic excitation into a charge separation. The chain is Cytochrome b559 subunit alpha from Prochlorococcus marinus (strain SARG / CCMP1375 / SS120).